Here is a 72-residue protein sequence, read N- to C-terminus: Sec-independent protein translocase protein TatA (72 aa).

The helical transmembrane segment at 1-21 threads the bilayer; the sequence is MPFGLGLPEILVIGVIALLIF. The disordered stretch occupies residues 41-72; it reads KSGVSDEPAPQQSASKETAPNPPQSLPSGKDS.

This sequence belongs to the TatA/E family. In terms of assembly, forms a complex with TatC.

It is found in the cell inner membrane. In terms of biological role, part of the twin-arginine translocation (Tat) system that transports large folded proteins containing a characteristic twin-arginine motif in their signal peptide across membranes. TatA could form the protein-conducting channel of the Tat system. This chain is Sec-independent protein translocase protein TatA, found in Gloeobacter violaceus (strain ATCC 29082 / PCC 7421).